Consider the following 37-residue polypeptide: Large ribosomal subunit protein bL36 (37 aa).

This sequence belongs to the bacterial ribosomal protein bL36 family.

This chain is Large ribosomal subunit protein bL36, found in Sulfurimonas denitrificans (strain ATCC 33889 / DSM 1251) (Thiomicrospira denitrificans (strain ATCC 33889 / DSM 1251)).